A 550-amino-acid chain; its full sequence is Arginine--tRNA ligase (550 aa).

Residues 130–140 (ANPTGPIHLGG) carry the 'HIGH' region motif.

It belongs to the class-I aminoacyl-tRNA synthetase family. In terms of assembly, monomer.

Its subcellular location is the cytoplasm. The enzyme catalyses tRNA(Arg) + L-arginine + ATP = L-arginyl-tRNA(Arg) + AMP + diphosphate. This Corynebacterium diphtheriae (strain ATCC 700971 / NCTC 13129 / Biotype gravis) protein is Arginine--tRNA ligase.